The chain runs to 652 residues: Bifunctional protein ThiO/ThiG (652 aa).

The interval 1–366 (MTRDIVIIGG…HYSRSQKQAS (366 aa)) is thiO. FAD-binding positions include 5 to 19 (IVII…AIAV) and 44 to 46 (AGM). Glutamate 52 serves as a coordination point for glycine. Position 173 (valine 173) interacts with FAD. 2 residues coordinate glycine: arginine 301 and arginine 327. 325–331 (HYRNGIL) contacts FAD. Residues 393–652 (PLIIAGKSFH…ASSPVTGTIS (260 aa)) form a thiG region. The active-site Schiff-base intermediate with DXP is the lysine 494. 1-deoxy-D-xylulose 5-phosphate is bound by residues glycine 555, 581–582 (AG), and 603–604 (NS).

This sequence in the N-terminal section; belongs to the DAO family. ThiO subfamily. In the C-terminal section; belongs to the ThiG family. As to quaternary structure, interacts with ThiH and ThiS. Requires FAD as cofactor.

Its subcellular location is the cytoplasm. The catalysed reaction is glycine + O2 + H2O = glyoxylate + H2O2 + NH4(+). It carries out the reaction [ThiS sulfur-carrier protein]-C-terminal-Gly-aminoethanethioate + 2-iminoacetate + 1-deoxy-D-xylulose 5-phosphate = [ThiS sulfur-carrier protein]-C-terminal Gly-Gly + 2-[(2R,5Z)-2-carboxy-4-methylthiazol-5(2H)-ylidene]ethyl phosphate + 2 H2O + H(+). It participates in cofactor biosynthesis; thiamine diphosphate biosynthesis. Catalyzes the FAD-dependent oxidative deamination of glycine. Is essential for thiamine biosynthesis since the oxidation of glycine catalyzed by ThiO generates the glycine imine intermediate (dehydroglycine) required for the biosynthesis of the thiazole ring of thiamine pyrophosphate. In terms of biological role, catalyzes the rearrangement of 1-deoxy-D-xylulose 5-phosphate (DXP) to produce the thiazole phosphate moiety of thiamine. Sulfur is provided by the thiocarboxylate moiety of the carrier protein ThiS. In vitro, sulfur can be provided by H(2)S. The chain is Bifunctional protein ThiO/ThiG (thiO/thiG) from Nostoc sp. (strain PCC 7120 / SAG 25.82 / UTEX 2576).